Consider the following 214-residue polypeptide: MNVNQTMADNQQRCELKLIASPGSWRLYSARKIDERFKSYEQKIFQRDRYTCQFCGFQARLYQDIVNLDGDYTNNRLSNLVTACCFCAQCFFVESVGVGGYGGGTLIYLPELTQAELNSLCHVLFCAITNDTGYKSSAQNIYRSFKFRSQIVEEKFGEGTSDPAIFGQLMIDSGVNSEEIREKLFKNIRLLPSRAKFRKQIEKWAASALEEIAD.

The Zn(2+) site is built by cysteine 52, cysteine 55, cysteine 84, and cysteine 87.

The T4BSS is a complex nanomachine composed of several subcomplexes. This subunit is part of the Type IV Coupling Complex (T4CC), a subcomplex composed of the DotLMNYZ core and the IcmSW-LvgA adapter subunits, linked by the C-terminal tail of DotL. Six DotLMNYZ hetero-pentameric units may assemble into a hexameric nanomachine, forming an inner membrane channel for effectors to pass through. Interacts directly with DotL. Interacts with DotZ.

The protein localises to the cytoplasm. Component of the Dot/Icm type IVB secretion system (T4BSS), which is used to inject bacterial effector proteins into eukaryotic host cells. Part of a subcomplex which recruits effector proteins and delivers them to the core transmembrane subcomplex. This Legionella pneumophila subsp. pneumophila (strain Philadelphia 1 / ATCC 33152 / DSM 7513) protein is Type 4 apparatus protein DotN.